The following is a 410-amino-acid chain: Probable inactive allantoicase (410 aa).

It belongs to the allantoicase family.

In terms of biological role, the function of this enzyme is unclear as allantoicase activity is not known to exist in mammals. This Macaca fascicularis (Crab-eating macaque) protein is Probable inactive allantoicase (ALLC).